The primary structure comprises 354 residues: MLYLPKKLFLFFFSCIVVIVNYNNSDFVNAANSIGFVNAANSIGLNYGLLGDNLPSPSKVITLYKSIDITKIRIFDPNTEVLNALRGHRDIAVTVGVRDQDLAALSASEEAVKGWFATNIEPYLSDINIAFITVGNEVIPGPIGPQVLPVMQSLTNLVKSRNLPISISTVVAMWNLEQSYPPSAGMFTSQAREQLVPVLKLLSQTNSPILVKIYPYFSYASDPSSIRLDYATFNTEAIVVQDGSLGYSNMFDAIFDAFVWAMEKEGVKDLPMVVSETGWPSAGNGNITTPDIAGTYNRNFVKHIASGKGTPKRPNKGIDGFLFATFNENQKPVGTEQNFGLYNPNDMKPIYNLF.

Positions 1 to 30 (MLYLPKKLFLFFFSCIVVIVNYNNSDFVNA) are cleaved as a signal peptide. Glutamate 137 (proton donor) is an active-site residue. Glutamate 276 functions as the Nucleophile in the catalytic mechanism. Asparagine 286 carries N-linked (GlcNAc...) asparagine glycosylation.

This sequence belongs to the glycosyl hydrolase 17 family.

It is found in the secreted. The enzyme catalyses Hydrolysis of (1-&gt;3)-beta-D-glucosidic linkages in (1-&gt;3)-beta-D-glucans.. In terms of biological role, may play a role in plant defense against pathogens. The polypeptide is Probable glucan endo-1,3-beta-glucosidase BG5 (Arabidopsis thaliana (Mouse-ear cress)).